The following is a 350-amino-acid chain: Transmembrane protein 185B (350 aa).

The next 7 membrane-spanning stretches (helical) occupy residues 16-36, 41-61, 81-101, 111-131, 168-188, 211-231, and 240-260; these read LIYT…DGII, WAVF…ASVG, FKAM…EVLV, FWLL…AACV, WLVV…VVLY, VTMA…EVLL, and TFSY…LMAT.

It belongs to the TMEM185 family.

It localises to the membrane. The protein is Transmembrane protein 185B (TMEM185B) of Homo sapiens (Human).